A 376-amino-acid chain; its full sequence is Chaperone protein DnaJ (376 aa).

A J domain is found at 5–69 (DYYEVLGISK…QKRAQYDQYG (65 aa)). The segment at 133-215 (GKDAEIEIPR…CHGKGRVTKT (83 aa)) adopts a CR-type zinc-finger fold. Zn(2+) is bound by residues Cys146, Cys149, Cys163, Cys166, Cys189, Cys192, Cys203, and Cys206. 4 CXXCXGXG motif repeats span residues 146-153 (CDTCHGSG), 163-170 (CSHCGGKG), 189-196 (CQYCNGTG), and 203-210 (CSTCHGKG).

The protein belongs to the DnaJ family. Homodimer. The cofactor is Zn(2+).

It is found in the cytoplasm. Participates actively in the response to hyperosmotic and heat shock by preventing the aggregation of stress-denatured proteins and by disaggregating proteins, also in an autonomous, DnaK-independent fashion. Unfolded proteins bind initially to DnaJ; upon interaction with the DnaJ-bound protein, DnaK hydrolyzes its bound ATP, resulting in the formation of a stable complex. GrpE releases ADP from DnaK; ATP binding to DnaK triggers the release of the substrate protein, thus completing the reaction cycle. Several rounds of ATP-dependent interactions between DnaJ, DnaK and GrpE are required for fully efficient folding. Also involved, together with DnaK and GrpE, in the DNA replication of plasmids through activation of initiation proteins. The protein is Chaperone protein DnaJ of Listeria welshimeri serovar 6b (strain ATCC 35897 / DSM 20650 / CCUG 15529 / CIP 8149 / NCTC 11857 / SLCC 5334 / V8).